A 126-amino-acid chain; its full sequence is Small ribosomal subunit protein eS8 (126 aa).

Residues 1–10 show a composition bias toward polar residues; it reads MAIWQGSSLR. Residues 1-35 are disordered; that stretch reads MAIWQGSSLRKPSGARSRRNKNKRNAEFGRNPAET.

The protein belongs to the eukaryotic ribosomal protein eS8 family. Part of the 30S ribosomal subunit.

In Methanosphaera stadtmanae (strain ATCC 43021 / DSM 3091 / JCM 11832 / MCB-3), this protein is Small ribosomal subunit protein eS8.